A 377-amino-acid polypeptide reads, in one-letter code: Citrate synthase (377 aa).

Active-site residues include His258 and Asp313.

This sequence belongs to the citrate synthase family. In terms of assembly, homodimer. The N-terminus is blocked by acetylation.

It carries out the reaction oxaloacetate + acetyl-CoA + H2O = citrate + CoA + H(+). It functions in the pathway carbohydrate metabolism; tricarboxylic acid cycle; isocitrate from oxaloacetate: step 1/2. Allosterically inhibited by NADH. This chain is Citrate synthase (gltA), found in Saccharolobus solfataricus (strain ATCC 35092 / DSM 1617 / JCM 11322 / P2) (Sulfolobus solfataricus).